We begin with the raw amino-acid sequence, 556 residues long: Formate--tetrahydrofolate ligase (556 aa).

65 to 72 provides a ligand contact to ATP; it reads TPAGEGKS.

Belongs to the formate--tetrahydrofolate ligase family.

It catalyses the reaction (6S)-5,6,7,8-tetrahydrofolate + formate + ATP = (6R)-10-formyltetrahydrofolate + ADP + phosphate. It participates in one-carbon metabolism; tetrahydrofolate interconversion. In Streptococcus pneumoniae serotype 4 (strain ATCC BAA-334 / TIGR4), this protein is Formate--tetrahydrofolate ligase.